Consider the following 685-residue polypeptide: Frizzled-8 (685 aa).

Residues 1 to 27 (MEWGYLLEVTSLLAALAVLQRSSGAAA) form the signal peptide. At 28 to 272 (ASAKELACQE…NPFFSQDERA (245 aa)) the chain is on the extracellular side. An FZ domain is found at 30 to 151 (AKELACQEIT…GNPDTLCMDY (122 aa)). 5 disulfide bridges follow: Cys35/Cys96, Cys43/Cys89, Cys80/Cys118, Cys107/Cys148, and Cys111/Cys135. Asn49 is a glycosylation site (N-linked (GlcNAc...) asparagine). 71 to 78 (QFWPLVEI) is a binding site for hexadecanoate. Positions 95–100 (ICLEDY) are wnt-binding. The wnt-binding stretch occupies residues 147–152 (LCMDYN). Asn152 carries an N-linked (GlcNAc...) asparagine glycan. A disordered region spans residues 155 to 223 (DLTTAAPSPP…KARPPGGGAA (69 aa)). A compositionally biased stretch (pro residues) spans 161-176 (PSPPRRLPPPPPPGEQ). Low complexity-rich tracts occupy residues 177–187 (PPSGSGHSRPP) and 200–223 (GSGD…GGAA). A helical transmembrane segment spans residues 273 to 293 (FTVFWIGLWSVLCFVSTFATV). The Cytoplasmic segment spans residues 294–309 (STFLIDMERFKYPERP). The helical transmembrane segment at 310-330 (IIFLSACYLFVSVGYLVRLVA) threads the bilayer. Topologically, residues 331-394 (GHEKVACSGG…RYETTGPALC (64 aa)) are extracellular. Residues 395-415 (TVVFLLVYFFGMASSIWWVIL) traverse the membrane as a helical segment. Residues 416 to 437 (SLTWFLAAGMKWGNEAIAGYSQ) are Cytoplasmic-facing. The chain crosses the membrane as a helical span at residues 438–458 (YFHLAAWLVPSVKSIAVLALS). Over 459–481 (SVDGDPVAGICYVGNQSLDNLRG) the chain is Extracellular. A glycan (N-linked (GlcNAc...) asparagine) is linked at Asn473. Residues 482–502 (FVLAPLVIYLFIGTMFLLAGF) traverse the membrane as a helical segment. Over 503 to 530 (VSLFRIRSVIKQQGGPTKTHKLEKLMIR) the chain is Cytoplasmic. The helical transmembrane segment at 531-551 (LGLFTVLYTVPAAVVVACLFY) threads the bilayer. The Extracellular segment spans residues 552–582 (EQHNRPRWEATHNCPCLRDLQPDQARRPDYA). Residues 583 to 603 (VFMLKYFMCLVVGITSGVWVW) form a helical membrane-spanning segment. Residues 604–685 (SGKTLESWRA…YPKQMPLSQV (82 aa)) lie on the Cytoplasmic side of the membrane. A Lys-Thr-X-X-X-Trp motif, mediates interaction with the PDZ domain of Dvl family members motif is present at residues 606–611 (KTLESW). Residues 631 to 655 (AGGSGPGGSGPGPGGGGGHGGGGGS) show a composition bias toward gly residues. The interval 631-656 (AGGSGPGGSGPGPGGGGGHGGGGGSL) is disordered. Positions 683–685 (SQV) match the PDZ-binding motif.

This sequence belongs to the G-protein coupled receptor Fz/Smo family. In terms of assembly, component of a Wnt-signaling complex that contains a WNT protein, a FZD protein and LRP5 or LRP6. Interacts directly with LRP5 or LRP6; the interaction is promoted by Wnt-binding and signaling and inhibited by DKK1. Interacts (via the PDZ-binding motif) with GPOC (via its PDZ domain). Interacts with RSPO1 and RSPO3. Interacts with glypican GPC3. Post-translationally, ubiquitinated by ZNRF3, leading to its degradation by the proteasome. As to expression, expressed in chondrocytes.

The protein localises to the membrane. The protein resides in the golgi apparatus. Its subcellular location is the cell membrane. Functionally, receptor for Wnt proteins. Component of the Wnt-Fzd-LRP5-LRP6 complex that triggers beta-catenin signaling through inducing aggregation of receptor-ligand complexes into ribosome-sized signalosomes. The beta-catenin canonical signaling pathway leads to the activation of disheveled proteins, inhibition of GSK-3 kinase, nuclear accumulation of beta-catenin and activation of Wnt target genes. A second signaling pathway involving PKC and calcium fluxes has been seen for some family members, but it is not yet clear if it represents a distinct pathway or if it can be integrated in the canonical pathway, as PKC seems to be required for Wnt-mediated inactivation of GSK-3 kinase. Both pathways seem to involve interactions with G-proteins. May be involved in transduction and intercellular transmission of polarity information during tissue morphogenesis and/or in differentiated tissues. Coreceptor along with RYK of Wnt proteins, such as WNT1. The chain is Frizzled-8 (Fzd8) from Mus musculus (Mouse).